The following is a 239-amino-acid chain: ATP-dependent dethiobiotin synthetase BioD (239 aa).

Position 15–20 (15–20) interacts with ATP; the sequence is EIGKTF. Mg(2+) is bound at residue threonine 19. Lysine 40 is an active-site residue. ATP is bound by residues aspartate 57, 118 to 121, 178 to 179, and 211 to 213; these read EGVG, NH, and AHL. Mg(2+)-binding residues include aspartate 57 and glutamate 118.

Belongs to the dethiobiotin synthetase family. As to quaternary structure, homodimer. Requires Mg(2+) as cofactor.

Its subcellular location is the cytoplasm. The catalysed reaction is (7R,8S)-7,8-diammoniononanoate + CO2 + ATP = (4R,5S)-dethiobiotin + ADP + phosphate + 3 H(+). It functions in the pathway cofactor biosynthesis; biotin biosynthesis; biotin from 7,8-diaminononanoate: step 1/2. In terms of biological role, catalyzes a mechanistically unusual reaction, the ATP-dependent insertion of CO2 between the N7 and N8 nitrogen atoms of 7,8-diaminopelargonic acid (DAPA, also called 7,8-diammoniononanoate) to form a ureido ring. This chain is ATP-dependent dethiobiotin synthetase BioD, found in Burkholderia vietnamiensis (strain G4 / LMG 22486) (Burkholderia cepacia (strain R1808)).